The following is a 435-amino-acid chain: Chaperone SurA (435 aa).

The signal sequence occupies residues 1 to 24 (MRLRSFAFLGFMLLVAMAPSMASA). 2 consecutive PpiC domains span residues 173–274 (DTAY…KLID) and 286–385 (VTEN…ELED).

It localises to the periplasm. It catalyses the reaction [protein]-peptidylproline (omega=180) = [protein]-peptidylproline (omega=0). Chaperone involved in the correct folding and assembly of outer membrane proteins. Recognizes specific patterns of aromatic residues and the orientation of their side chains, which are found more frequently in integral outer membrane proteins. May act in both early periplasmic and late outer membrane-associated steps of protein maturation. The polypeptide is Chaperone SurA (Chromohalobacter salexigens (strain ATCC BAA-138 / DSM 3043 / CIP 106854 / NCIMB 13768 / 1H11)).